The chain runs to 431 residues: MYRTKVGLKDRQQLYKLIISQLLYDGYISIANGLINEIKPQSVCAPSEQLLHLIKLGMENDDTAVQYAIGRSDTVAPGTGIDLEFDADVQTMSPEASEYETCYVTSHKGPCRVATYSRDGQLIATGSADASIKILDTERMLAKSAMPIEVMMNETAQQNMENHPVIRTLYDHVDEVTCLAFHPTEQILASGSRDYTLKLFDYSKPSAKRAFKYIQEAEMLRSISFHPSGDFILVGTQHPTLRLYDINTFQCFVSCNPQDQHTDAICSVNYNSSANMYVTGSKDGCIKLWDGVSNRCITTFEKAHDGAEVCSAIFSKNSKYILSSGKDSVAKLWEISTGRTLVRYTGAGLSGRQVHRTQAVFNHTEDYVLLPDERTISLCCWDSRTAERRNLLSLGHNNIVRCIVHSPTNPGFMTCSDDFRARFWYRRSTTD.

A hydrophobic region spans residues 14–35; the sequence is LYKLIISQLLYDGYISIANGLI. WD repeat units follow at residues 106–145, 171–210, 215–254, 260–301, 303–343, and 395–430; these read SHKGPCRVATYSRDGQLIATGSADASIKILDTERMLAKSA, DHVDEVTCLAFHPTEQILASGSRDYTLKLFDYSKPSAKRA, QEAEMLRSISFHPSGDFILVGTQHPTLRLYDINTFQCFVS, QHTD…TTFE, AHDG…TLVR, and GHNNIVRCIVHSPTNPGFMTCSDDFRARFWYRRSTT.

As to quaternary structure, homodimer. The CSTF complex is composed of CSTF1 (50 kDa subunit), CSTF2 (64 kDa subunit) and CSTF3 (77 kDa subunit). Interacts (via repeats WD) directly with CSTF3. Interacts (via repeat WD6) with BARD1. Interacts with ERCC6. In terms of processing, the N-terminus is blocked.

Its subcellular location is the nucleus. One of the multiple factors required for polyadenylation and 3'-end cleavage of mammalian pre-mRNAs. May be responsible for the interaction of CSTF with other factors to form a stable complex on the pre-mRNA. The polypeptide is Cleavage stimulation factor subunit 1 (CSTF1) (Homo sapiens (Human)).